The chain runs to 423 residues: Serine hydroxymethyltransferase (423 aa).

(6S)-5,6,7,8-tetrahydrofolate-binding positions include Leu118 and Gly122–Leu124. At Lys227 the chain carries N6-(pyridoxal phosphate)lysine. Ser351–Phe353 is a binding site for (6S)-5,6,7,8-tetrahydrofolate.

This sequence belongs to the SHMT family. In terms of assembly, homodimer. The cofactor is pyridoxal 5'-phosphate.

The protein localises to the cytoplasm. It catalyses the reaction (6R)-5,10-methylene-5,6,7,8-tetrahydrofolate + glycine + H2O = (6S)-5,6,7,8-tetrahydrofolate + L-serine. Its pathway is one-carbon metabolism; tetrahydrofolate interconversion. It functions in the pathway amino-acid biosynthesis; glycine biosynthesis; glycine from L-serine: step 1/1. In terms of biological role, catalyzes the reversible interconversion of serine and glycine with tetrahydrofolate (THF) serving as the one-carbon carrier. This reaction serves as the major source of one-carbon groups required for the biosynthesis of purines, thymidylate, methionine, and other important biomolecules. Also exhibits THF-independent aldolase activity toward beta-hydroxyamino acids, producing glycine and aldehydes, via a retro-aldol mechanism. The chain is Serine hydroxymethyltransferase from Petrotoga mobilis (strain DSM 10674 / SJ95).